Consider the following 418-residue polypeptide: Glutamyl-tRNA reductase (418 aa).

Residues 49 to 52 (TCNR), serine 109, 114 to 116 (EPQ), and glutamine 120 contribute to the substrate site. Cysteine 50 acts as the Nucleophile in catalysis. 189-194 (GAGETI) is a binding site for NADP(+).

It belongs to the glutamyl-tRNA reductase family. As to quaternary structure, homodimer.

The enzyme catalyses (S)-4-amino-5-oxopentanoate + tRNA(Glu) + NADP(+) = L-glutamyl-tRNA(Glu) + NADPH + H(+). The protein operates within porphyrin-containing compound metabolism; protoporphyrin-IX biosynthesis; 5-aminolevulinate from L-glutamyl-tRNA(Glu): step 1/2. In terms of biological role, catalyzes the NADPH-dependent reduction of glutamyl-tRNA(Glu) to glutamate 1-semialdehyde (GSA). The sequence is that of Glutamyl-tRNA reductase from Escherichia coli O157:H7.